A 74-amino-acid polypeptide reads, in one-letter code: U4-theraphotoxin-Cg1a (74 aa).

Residues 1-19 (MNATIFALLLLLNLAMHNA) form the signal peptide. Positions 20–39 (AEQSSETDMDDTLLIPEINR) are excised as a propeptide. 3 disulfides stabilise this stretch: Cys-42–Cys-56, Cys-49–Cys-61, and Cys-55–Cys-71.

This sequence belongs to the neurotoxin 36 family. 01 subfamily. Expressed by the venom gland.

The protein localises to the secreted. Probable ion channel inhibitor. This Chilobrachys guangxiensis (Chinese earth tiger tarantula) protein is U4-theraphotoxin-Cg1a.